A 189-amino-acid chain; its full sequence is GMP synthase [glutamine-hydrolyzing] subunit A (189 aa).

Residues 1-189 form the Glutamine amidotransferase type-1 domain; it reads MIVILNNGGQ…CKVCGFKFNE (189 aa). Cysteine 76 (nucleophile) is an active-site residue. Residues histidine 163 and glutamate 165 contribute to the active site.

Heterodimer composed of a glutamine amidotransferase subunit (A) and a GMP-binding subunit (B).

It carries out the reaction XMP + L-glutamine + ATP + H2O = GMP + L-glutamate + AMP + diphosphate + 2 H(+). It functions in the pathway purine metabolism; GMP biosynthesis; GMP from XMP (L-Gln route): step 1/1. Functionally, catalyzes the synthesis of GMP from XMP. The polypeptide is GMP synthase [glutamine-hydrolyzing] subunit A (Methanococcus vannielii (strain ATCC 35089 / DSM 1224 / JCM 13029 / OCM 148 / SB)).